Consider the following 185-residue polypeptide: Inner membrane-spanning protein YciB (185 aa).

Helical transmembrane passes span 19–39 (IHGI…LMAW), 49–69 (TMTW…LYFH), 72–92 (TFIK…LLFT), 122–142 (GYWI…AYAF), and 150–170 (FKLF…AVVI).

The protein belongs to the YciB family.

The protein resides in the cell inner membrane. Plays a role in cell envelope biogenesis, maintenance of cell envelope integrity and membrane homeostasis. This Acidithiobacillus ferrooxidans (strain ATCC 23270 / DSM 14882 / CIP 104768 / NCIMB 8455) (Ferrobacillus ferrooxidans (strain ATCC 23270)) protein is Inner membrane-spanning protein YciB.